The following is a 302-amino-acid chain: ATP synthase gamma chain, sodium ion specific (302 aa).

Belongs to the ATPase gamma chain family. F-type ATPases have 2 components, CF(1) - the catalytic core - and CF(0) - the membrane proton channel. CF(1) has five subunits: alpha(3), beta(3), gamma(1), delta(1), epsilon(1). CF(0) has three main subunits: a, b and c.

It is found in the cell membrane. Inhibited by nitrate. Its function is as follows. Produces ATP from ADP in the presence of a proton gradient across the membrane. The gamma chain is believed to be important in regulating ATPase activity and the flow of protons through the CF(0) complex. In Acetobacterium woodii (strain ATCC 29683 / DSM 1030 / JCM 2381 / KCTC 1655 / WB1), this protein is ATP synthase gamma chain, sodium ion specific (atpG).